The primary structure comprises 175 residues: Adenine phosphoribosyltransferase (175 aa).

The protein belongs to the purine/pyrimidine phosphoribosyltransferase family. Homodimer.

Its subcellular location is the cytoplasm. The catalysed reaction is AMP + diphosphate = 5-phospho-alpha-D-ribose 1-diphosphate + adenine. It participates in purine metabolism; AMP biosynthesis via salvage pathway; AMP from adenine: step 1/1. Functionally, catalyzes a salvage reaction resulting in the formation of AMP, that is energically less costly than de novo synthesis. This Parvibaculum lavamentivorans (strain DS-1 / DSM 13023 / NCIMB 13966) protein is Adenine phosphoribosyltransferase.